Here is a 912-residue protein sequence, read N- to C-terminus: MFWVLVLLSFIVLIGDGMISEGAGLRPRYVDVGAIFSLGTLQGEVTNIAMKAAEEDVNSDPSFLGGSKLRITTYDAKRNGFLTIMGALQFMETDAVAIIGPQTSIMAHVLSHLANELSVPMLSFTALDPSLSALQFPFFVQTAPSDLFLMRAIAEMISYYGWSEVIALYNDDDNSRNGITALGDELEGRRCKISYKAVLPLDVVITSPREIINELVKIQGMESRVIIVNTFPKTGKKIFEEAQKLGMMEKGYVWIATTWLTSLLDSVNPLPAKTAESLRGVLTLRIHTPNSKKKKDFVARWNKLSNGTVGLNVYGLYAYDTVWIIARAVKRLLDSRANISFSSDPKLTSMKGGGSLNLGALSIFDQGSQFLDYIVNTNMTGVTGQIQFLPDRSMIQPSYDIINVVDDGFRQIGYWSNHSGLSIIPPESLYKKLSNRSSSNQHLNNVTWPGGTSETPRGWVFPNNGRRLRIGVPDRASFKEFVSRLDGSNKVQGYAIDVFEAAVKLISYPVPHEFVLFGDGLKNPNFNEFVNNVTIGVFDAVVGDIAIVTKRTRIVDFTQPYIESGLVVVAPVTKLNDTPWAFLRPFTPPMWAVTAAFFLIVGSVIWILEHRINDEFRGPPRKQIVTILWFSFSTMFFSHRENTVSTLGRAVLLIWLFVVLIITSSYTASLTSILTVQQLNSPIRGVDTLISSSGRVGFQVGSYAENYMIDELNIARSRLVPLGSPKEYAAALQNGTVAAIVDERPYVDLFLSEFCGFAIRGQEFTRSGWGFAFPRDSPLAIDMSTAILGLSETGQLQKIHDKWLSRSNCSNLNGSVSDEDSEQLKLRSFWGLFLVCGISCFIALFIYFFKIVRDFFRHGKYDEEATVPSPESSRSKSLQTFLAYFDEKEDESKRRMKRKRNDDLSLKPSRPI.

The first 22 residues, M1–G22, serve as a signal peptide directing secretion. Residues A23–T587 lie on the Extracellular side of the membrane. N-linked (GlcNAc...) asparagine glycosylation is found at N306, N338, N378, N417, N435, N445, and N532. Glycine-binding positions include D544 to A546 and R551. L-methionine contacts are provided by residues D544–A546 and R551. Residues P588–L608 form a helical membrane-spanning segment. Over E609–R617 the chain is Cytoplasmic. The helical transmembrane segment at G618–S638 threads the bilayer. The Cytoplasmic portion of the chain corresponds to H639–R649. A helical membrane pass occupies residues A650–L670. Residues T671 to S828 lie on the Extracellular side of the membrane. Y703 contacts glycine. Y703 lines the L-methionine pocket. An N-linked (GlcNAc...) asparagine glycan is attached at N734. E743–Y746 is a binding site for glycine. L-methionine is bound at residue E743 to Y746. An intrachain disulfide couples C755 to C809. N-linked (GlcNAc...) asparagine glycans are attached at residues N808 and N813. Residues F829–F849 traverse the membrane as a helical segment. The Cytoplasmic segment spans residues K850–I912. The tract at residues K888–I912 is disordered.

Belongs to the glutamate-gated ion channel (TC 1.A.10.1) family. As to quaternary structure, forms a heteromeric channel with GLR3.4. As to expression, expressed in leaves and siliques, and at lower level in flowers and roots. Detected in the vascular tissues of both shoots and roots. Expressed in root phloem.

The protein localises to the cell membrane. Its function is as follows. Glutamate-gated receptor that probably acts as a non-selective cation channel. May be involved in light-signal transduction and calcium homeostasis via the regulation of calcium influx into cells. Could play a role in calcium unloading from the xylem vessels. Acts as a negative regulator of lateral root initiation and development. May restrict primordia numbers and position along the root axis by a signaling process originating in the phloem. The protein is Glutamate receptor 3.2 of Arabidopsis thaliana (Mouse-ear cress).